Reading from the N-terminus, the 775-residue chain is Ubiquitin carboxyl-terminal hydrolase 14 (775 aa).

The UBP-type 1; degenerate zinc finger occupies 1 to 108 (MSCPHLTETN…EDLYDYFYVP (108 aa)). C25, C28, C41, C44, C49, H56, H60, H66, C153, H155, C174, C177, C186, C189, C194, H207, H211, H217, C236, and C239 together coordinate Zn(2+). Residues 151-259 (TTCDHIINLP…THMLNFGIDI (109 aa)) form a UBP-type 2 zinc finger. The USP domain occupies 300-774 (TGLKNLGNSC…TGYVYLFERL (475 aa)). C309 acts as the Nucleophile in catalysis. S456 is modified (phosphoserine). UBA domains follow at residues 576–617 (EWNQ…LFEH) and 639–679 (SVSE…ILNH). Residue H730 is the Proton acceptor of the active site.

Belongs to the peptidase C19 family.

It catalyses the reaction Thiol-dependent hydrolysis of ester, thioester, amide, peptide and isopeptide bonds formed by the C-terminal Gly of ubiquitin (a 76-residue protein attached to proteins as an intracellular targeting signal).. The protein is Ubiquitin carboxyl-terminal hydrolase 14 (ubp14) of Schizosaccharomyces pombe (strain 972 / ATCC 24843) (Fission yeast).